An 807-amino-acid chain; its full sequence is Glycerol-3-phosphate acyltransferase (807 aa).

The short motif at 308-313 is the HXXXXD motif element; it reads CHRSHM.

The protein belongs to the GPAT/DAPAT family.

The protein localises to the cell inner membrane. The catalysed reaction is sn-glycerol 3-phosphate + an acyl-CoA = a 1-acyl-sn-glycero-3-phosphate + CoA. It participates in phospholipid metabolism; CDP-diacylglycerol biosynthesis; CDP-diacylglycerol from sn-glycerol 3-phosphate: step 1/3. This is Glycerol-3-phosphate acyltransferase from Shewanella sp. (strain MR-7).